The sequence spans 201 residues: FMN-dependent NADH:quinone oxidoreductase (201 aa).

FMN contacts are provided by residues Ser-10, Ser-16–Ser-18, and Met-96–Phe-99.

It belongs to the azoreductase type 1 family. As to quaternary structure, homodimer. It depends on FMN as a cofactor.

It catalyses the reaction 2 a quinone + NADH + H(+) = 2 a 1,4-benzosemiquinone + NAD(+). The catalysed reaction is N,N-dimethyl-1,4-phenylenediamine + anthranilate + 2 NAD(+) = 2-(4-dimethylaminophenyl)diazenylbenzoate + 2 NADH + 2 H(+). Functionally, quinone reductase that provides resistance to thiol-specific stress caused by electrophilic quinones. In terms of biological role, also exhibits azoreductase activity. Catalyzes the reductive cleavage of the azo bond in aromatic azo compounds to the corresponding amines. The protein is FMN-dependent NADH:quinone oxidoreductase of Sodalis glossinidius (strain morsitans).